We begin with the raw amino-acid sequence, 530 residues long: Ubiquitin carboxyl-terminal hydrolase 17-like protein 22 (530 aa).

Residues 80–375 (AGLQNMGNTC…QAYVLFYIQK (296 aa)) form the USP domain. Cys-89 (nucleophile) is an active-site residue. Catalysis depends on His-334, which acts as the Proton acceptor. Composition is skewed to basic and acidic residues over residues 382–392 (SESVSRGREPR) and 398–412 (DTDR…KRDH). Disordered stretches follow at residues 382-412 (SESV…KRDH) and 476-530 (KNHH…LVCQ). Positions 484-495 (SSLLKLSSTTPT) are enriched in low complexity. Over residues 496–505 (HQESMNTGTL) the composition is skewed to polar residues. Residues 510 to 524 (GRARRSKGKNKHSKR) show a composition bias toward basic residues.

It belongs to the peptidase C19 family. USP17 subfamily.

It is found in the nucleus. Its subcellular location is the endoplasmic reticulum. The catalysed reaction is Thiol-dependent hydrolysis of ester, thioester, amide, peptide and isopeptide bonds formed by the C-terminal Gly of ubiquitin (a 76-residue protein attached to proteins as an intracellular targeting signal).. Its function is as follows. Deubiquitinating enzyme that removes conjugated ubiquitin from specific proteins to regulate different cellular processes that may include cell proliferation, progression through the cell cycle, apoptosis, cell migration, and the cellular response to viral infection. The protein is Ubiquitin carboxyl-terminal hydrolase 17-like protein 22 (USP17L22) of Homo sapiens (Human).